Consider the following 238-residue polypeptide: Ribitol-5-phosphate cytidylyltransferase (238 aa).

Residues 7-10 and 81-87 contribute to the CTP site; these read LAGG and GDDRNHS.

It belongs to the IspD/TarI cytidylyltransferase family. TarI subfamily.

It catalyses the reaction D-ribitol 5-phosphate + CTP + H(+) = CDP-L-ribitol + diphosphate. The protein operates within cell wall biogenesis; poly(ribitol phosphate) teichoic acid biosynthesis. Functionally, catalyzes the transfer of the cytidylyl group of CTP to D-ribitol 5-phosphate. This chain is Ribitol-5-phosphate cytidylyltransferase, found in Staphylococcus epidermidis (strain ATCC 12228 / FDA PCI 1200).